Here is a 252-residue protein sequence, read N- to C-terminus: Indole-3-glycerol phosphate synthase (252 aa).

Belongs to the TrpC family.

It catalyses the reaction 1-(2-carboxyphenylamino)-1-deoxy-D-ribulose 5-phosphate + H(+) = (1S,2R)-1-C-(indol-3-yl)glycerol 3-phosphate + CO2 + H2O. The protein operates within amino-acid biosynthesis; L-tryptophan biosynthesis; L-tryptophan from chorismate: step 4/5. This Leptospira interrogans serogroup Icterohaemorrhagiae serovar copenhageni (strain Fiocruz L1-130) protein is Indole-3-glycerol phosphate synthase.